The sequence spans 492 residues: 2-succinylbenzoate--CoA ligase (492 aa).

It belongs to the ATP-dependent AMP-binding enzyme family. MenE subfamily.

The catalysed reaction is 2-succinylbenzoate + ATP + CoA = 2-succinylbenzoyl-CoA + AMP + diphosphate. Its pathway is quinol/quinone metabolism; 1,4-dihydroxy-2-naphthoate biosynthesis; 1,4-dihydroxy-2-naphthoate from chorismate: step 5/7. It participates in quinol/quinone metabolism; menaquinone biosynthesis. Functionally, converts 2-succinylbenzoate (OSB) to 2-succinylbenzoyl-CoA (OSB-CoA). This Staphylococcus aureus (strain USA300 / TCH1516) protein is 2-succinylbenzoate--CoA ligase.